The primary structure comprises 249 residues: Methylthioribulose-1-phosphate dehydratase (249 aa).

Residues histidine 103 and histidine 105 each contribute to the Zn(2+) site.

The protein belongs to the aldolase class II family. MtnB subfamily. It depends on Zn(2+) as a cofactor.

It catalyses the reaction 5-(methylsulfanyl)-D-ribulose 1-phosphate = 5-methylsulfanyl-2,3-dioxopentyl phosphate + H2O. The protein operates within amino-acid biosynthesis; L-methionine biosynthesis via salvage pathway; L-methionine from S-methyl-5-thio-alpha-D-ribose 1-phosphate: step 2/6. Its function is as follows. Catalyzes the dehydration of methylthioribulose-1-phosphate (MTRu-1-P) into 2,3-diketo-5-methylthiopentyl-1-phosphate (DK-MTP-1-P). The polypeptide is Methylthioribulose-1-phosphate dehydratase (Leptospira interrogans serogroup Icterohaemorrhagiae serovar Lai (strain 56601)).